The chain runs to 369 residues: DNA replication and repair protein RecF (369 aa).

Residue 30-37 (GDNGSGKT) coordinates ATP.

This sequence belongs to the RecF family.

It is found in the cytoplasm. Functionally, the RecF protein is involved in DNA metabolism; it is required for DNA replication and normal SOS inducibility. RecF binds preferentially to single-stranded, linear DNA. It also seems to bind ATP. The polypeptide is DNA replication and repair protein RecF (Pseudomonas paraeruginosa (strain DSM 24068 / PA7) (Pseudomonas aeruginosa (strain PA7))).